The primary structure comprises 420 residues: Glutamyl-tRNA reductase (420 aa).

Residues 49 to 52, Ser109, 114 to 116, and Gln120 each bind substrate; these read TCNR and EPQ. The active-site Nucleophile is Cys50. Position 189 to 194 (189 to 194) interacts with NADP(+); the sequence is GAGETI.

Belongs to the glutamyl-tRNA reductase family. As to quaternary structure, homodimer.

The enzyme catalyses (S)-4-amino-5-oxopentanoate + tRNA(Glu) + NADP(+) = L-glutamyl-tRNA(Glu) + NADPH + H(+). It functions in the pathway porphyrin-containing compound metabolism; protoporphyrin-IX biosynthesis; 5-aminolevulinate from L-glutamyl-tRNA(Glu): step 1/2. In terms of biological role, catalyzes the NADPH-dependent reduction of glutamyl-tRNA(Glu) to glutamate 1-semialdehyde (GSA). In Proteus mirabilis (strain HI4320), this protein is Glutamyl-tRNA reductase.